The following is a 438-amino-acid chain: Xylose isomerase (438 aa).

Aspartate 306 and aspartate 308 together coordinate Mg(2+).

The protein belongs to the xylose isomerase family. Homotetramer. Mg(2+) is required as a cofactor.

The protein localises to the cytoplasm. The catalysed reaction is alpha-D-xylose = alpha-D-xylulofuranose. This is Xylose isomerase from Pseudomonas fluorescens (strain SBW25).